We begin with the raw amino-acid sequence, 765 residues long: Probable dipeptidyl peptidase 4 (765 aa).

Positions 1-14 (MKWSILLLVGCAAA) are cleaved as a signal peptide. Asn35, Asn78, Asn101, Asn110, Asn169, Asn218, Asn465, and Asn490 each carry an N-linked (GlcNAc...) asparagine glycan. The active-site Charge relay system is Ser613. Asn665 carries an N-linked (GlcNAc...) asparagine glycan. Active-site charge relay system residues include Asp690 and His725.

The protein belongs to the peptidase S9B family.

Its subcellular location is the secreted. It catalyses the reaction Release of an N-terminal dipeptide, Xaa-Yaa-|-Zaa-, from a polypeptide, preferentially when Yaa is Pro, provided Zaa is neither Pro nor hydroxyproline.. Its function is as follows. Extracellular dipeptidyl-peptidase which removes N-terminal dipeptides sequentially from polypeptides having unsubstituted N-termini provided that the penultimate residue is proline. The protein is Probable dipeptidyl peptidase 4 (dpp4) of Neosartorya fischeri (strain ATCC 1020 / DSM 3700 / CBS 544.65 / FGSC A1164 / JCM 1740 / NRRL 181 / WB 181) (Aspergillus fischerianus).